Consider the following 261-residue polypeptide: RING-H2 finger protein ATL58 (261 aa).

The chain crosses the membrane as a helical span at residues 25 to 45 (AFIFSVPICFTFIILFLFYLI). The segment at 100 to 142 (CSVCLGDYQPNDKLQQIPVCKHTFHMDCIDLWLTSHTTCPLCR) adopts an RING-type; atypical zinc-finger fold. Disordered regions lie at residues 149-227 (RSRQ…NDGH) and 241-261 (MEEDERNNIGTSSACCSCRTG). Polar residues predominate over residues 194–221 (SGVSSQPESQPVVNHRGVSSQPESQPVN).

Belongs to the RING-type zinc finger family. ATL subfamily.

It localises to the membrane. The catalysed reaction is S-ubiquitinyl-[E2 ubiquitin-conjugating enzyme]-L-cysteine + [acceptor protein]-L-lysine = [E2 ubiquitin-conjugating enzyme]-L-cysteine + N(6)-ubiquitinyl-[acceptor protein]-L-lysine.. It functions in the pathway protein modification; protein ubiquitination. The protein is RING-H2 finger protein ATL58 (ATL58) of Arabidopsis thaliana (Mouse-ear cress).